Reading from the N-terminus, the 727-residue chain is Catalase-peroxidase (727 aa).

The tryptophyl-tyrosyl-methioninium (Trp-Tyr) (with M-244) cross-link spans 95-218; the sequence is WHSAGTYRII…LAAVQMGLIY (124 aa). His-96 functions as the Proton acceptor in the catalytic mechanism. The segment at residues 218 to 244 is a cross-link (tryptophyl-tyrosyl-methioninium (Tyr-Met) (with W-95)); the sequence is YVNPEGPNGEPDVLGAAKDIKESFGKM. A heme b-binding site is contributed by His-259.

Belongs to the peroxidase family. Peroxidase/catalase subfamily. In terms of assembly, homodimer or homotetramer. Requires heme b as cofactor. Formation of the three residue Trp-Tyr-Met cross-link is important for the catalase, but not the peroxidase activity of the enzyme.

It carries out the reaction H2O2 + AH2 = A + 2 H2O. The catalysed reaction is 2 H2O2 = O2 + 2 H2O. Functionally, bifunctional enzyme with both catalase and broad-spectrum peroxidase activity. The protein is Catalase-peroxidase of Persephonella marina (strain DSM 14350 / EX-H1).